The following is a 130-amino-acid chain: Lysozyme C (130 aa).

In terms of domain architecture, C-type lysozyme spans 2-130 (KVYGRCELAA…VNVWIRGCRL (129 aa)). Disulfide bonds link cysteine 7-cysteine 128, cysteine 31-cysteine 116, cysteine 65-cysteine 81, and cysteine 77-cysteine 95. Active-site residues include glutamate 36 and aspartate 53.

It belongs to the glycosyl hydrolase 22 family. In terms of assembly, monomer.

It localises to the secreted. The enzyme catalyses Hydrolysis of (1-&gt;4)-beta-linkages between N-acetylmuramic acid and N-acetyl-D-glucosamine residues in a peptidoglycan and between N-acetyl-D-glucosamine residues in chitodextrins.. In terms of biological role, lysozymes have primarily a bacteriolytic function; those in tissues and body fluids are associated with the monocyte-macrophage system and enhance the activity of immunoagents. In Phasianus versicolor (Green pheasant), this protein is Lysozyme C (LYZ).